The primary structure comprises 194 residues: CASP-like protein 4D1 (194 aa).

Over 1–10 (MASRTVLLPS) the chain is Cytoplasmic. Residues 11 to 31 (AVLILRLLSLGLLAASLALIA) traverse the membrane as a helical segment. The Extracellular portion of the chain corresponds to 32 to 55 (ADKLNVDSDPPQRYTFRDVYAYRY). Residues 56 to 76 (VLAVAVIGCAYTLLQLPLAAV) traverse the membrane as a helical segment. The Cytoplasmic portion of the chain corresponds to 77 to 94 (SIIASGNNKRGIGAGGGS). The chain crosses the membrane as a helical span at residues 95–115 (VAVALLVLVLLADVVFALLLA). Over 116–161 (TGAAAGFAFTYDVKRYLDGQFDDDSIGTPEVDKLHRDMDKFFDLAY) the chain is Extracellular. Residues 162 to 182 (AAAGLMLAAAACMALVIMLSV) form a helical membrane-spanning segment. Over 183–194 (YSLARQVRSDYI) the chain is Cytoplasmic.

Belongs to the Casparian strip membrane proteins (CASP) family. Homodimer and heterodimers.

The protein localises to the cell membrane. The chain is CASP-like protein 4D1 from Sorghum bicolor (Sorghum).